The following is a 395-amino-acid chain: Neuromedin-U receptor 2 (395 aa).

At M1–S41 the chain is on the extracellular side. N-linked (GlcNAc...) asparagine glycosylation is found at N6 and N19. Residues V42–I62 traverse the membrane as a helical segment. Topologically, residues A63 to Y74 are cytoplasmic. Residues Y75–V95 form a helical membrane-spanning segment. The Extracellular segment spans residues Y96 to T115. A disulfide bridge connects residues C111 and C196. The helical transmembrane segment at A116–V138 threads the bilayer. At A139 to R157 the chain is on the cytoplasmic side. Residues I158–G178 form a helical membrane-spanning segment. The Extracellular segment spans residues I179–T212. N186 carries an N-linked (GlcNAc...) asparagine glycan. A helical transmembrane segment spans residues S213–L233. At R234–S257 the chain is on the cytoplasmic side. A helical transmembrane segment spans residues V258–V278. The Extracellular portion of the chain corresponds to D279–L293. The chain crosses the membrane as a helical span at residues A294–V314. Residues N315–P395 are Cytoplasmic-facing.

This sequence belongs to the G-protein coupled receptor 1 family. In terms of tissue distribution, expressed primarily in brain tissues, more specifically in medulla and spinal cord. Widespread distribution in peripheral tissues.

Its subcellular location is the cell membrane. Its function is as follows. Receptor for the neuromedin-U and neuromedin-S neuropeptides. The chain is Neuromedin-U receptor 2 (Nmur2) from Mus musculus (Mouse).